A 1132-amino-acid polypeptide reads, in one-letter code: APC membrane recruitment protein 1 (1132 aa).

N-acetylmethionine is present on Met-1. Polar residues predominate over residues 1–21 (MESQQDEAVQTKGASTSSDAQ). Disordered regions lie at residues 1-256 (MESQ…ACKN), 268-301 (FMQPKPVLEGGSLEEPHTSETEGKVVAGEVNPPN), 338-423 (SMTD…GEEN), 469-505 (GLGELLTPQSDQQESAPNSDEGYYDSTTPGFEDDSGE), 674-699 (TSGGSQTSHRGTTSAFPATSSSEPDW), 736-770 (MQEANFGGSPRKAYPSYSPPEEPEEEEEEKEGNAT), 924-949 (ELQAHQEDSDEEGEEEEGEWGRDSPL), and 1038-1132 (SQAS…NLAK). The segment covering 24 to 35 (GAEKGAKNKTTE) has biased composition (basic and acidic residues). Residues 121-133 (SKSSAQFPSSQSA) are compositionally biased toward low complexity. Basic and acidic residues-rich tracts occupy residues 195–208 (KELEGARTRSHEHV), 218–229 (EIFRDTRKENAK), and 281–290 (EEPHTSETEG). Residues 372–423 (ALPDDDDNDDEEEEEEEEEEEEEEEEEEEEEEEEEEEELLEDEEEVKDGEEN) show a composition bias toward acidic residues. 2 stretches are compositionally biased toward polar residues: residues 475-486 (TPQSDQQESAPN) and 677-696 (GSQTSHRGTTSAFPATSSSE). Acidic residues-rich tracts occupy residues 756–765 (EEPEEEEEEK) and 931–941 (DSDEEGEEEEG). Polar residues-rich tracts occupy residues 1059–1072 (SCSSISGANSQSQA) and 1115–1132 (ASLSTSYSSTAMNGNLAK).

The protein belongs to the Amer family. Interacts with CTNNB1, AXIN1, LRP6, KEAP1, APC and BTRC. Interacts with SCF (SKP1-CUL1-F-box protein) E3 ubiquitin-protein ligase complexes containing BTRC and/or FBXW11. Identified in the beta-catenin destruction complex containing CTNNB1, APC, AXIN1 and AXIN2. Interacts with WT1. Expressed in kidney.

It localises to the cytoplasm. Its subcellular location is the cell membrane. It is found in the nucleus. Regulator of the canonical Wnt signaling pathway. Acts by specifically binding phosphatidylinositol 4,5-bisphosphate (PtdIns(4,5)P2), translocating to the cell membrane and interacting with key regulators of the canonical Wnt signaling pathway, such as components of the beta-catenin destruction complex. Acts both as a positive and negative regulator of the Wnt signaling pathway, depending on the context: acts as a positive regulator by promoting LRP6 phosphorylation. Also acts as a negative regulator by acting as a scaffold protein for the beta-catenin destruction complex and promoting stabilization of Axin at the cell membrane. Promotes CTNNB1 ubiquitination and degradation. Involved in kidney development. This is APC membrane recruitment protein 1 (Amer1) from Mus musculus (Mouse).